A 994-amino-acid chain; its full sequence is MADRRVGNRPMGRRGRLEIQSGTCNVCSAPCSSCMHHNAEFSGSKSDESSDENSHGVLASQCSFNGDNLLRSSGVNAPGSSHNTSSEASHLVNSNHDTSSENAESKEIIRSSDISHGPLLDRPHKDQDSMKVDSCNDHQARSTLGQGKVKEKSGAKNNEEKKNTLTGSSKHSGPRVGKSGENVLLNKADESNTSAMSDSESENDPEMLELDVKVCDTCGDAGREDLLAICSRCSDGAEHTYCMRVMLKKVPKGYWLCEECKFAEKAEKHKLETKRKRESEVNVNTQISSKRHIDKFEAVPDSKRLAVGAQIGSPKRSVLPRMSTLSRETSFKGLEKPTRKLAHYSSFNSHSSDDTESTRSTDSQLQSPKGSFLKSNSFNSLSSRSKVRPVDDDMLPRQKTGNENSSLEVKEGFSKNVGKSMSSRCIDVGSSNCNDSKVKGSKQLKDWSTEANPSASISRGNSSIPYAKSPRDLKDLQSDGKQGSLSKQARHLSRNRLEDIVASVGDSSKNEKCSSSEQISSEAKCKDELAQVDGVPRSREFREAGEKTKDAVGNHQKRNIGEDNNKGNRLRAAVDAALRKKPSFSKNRGLEQSDLPPVSNVDSGCNKALKCLSSKVPVIRDWPVGFQGLPGGHPNLRTDKQTNTVNEKQFTLAGTDATTASQSVEPEVNDPSVQSVMRDLPVAAPNVLSTTSAIPKPEYIWQGDLEVQKSRNLSAMHSGIQAYLSTLASPKVVEVVKQFPEKVTLNEVPRLSSWPAQFQDTGAKEQHVALFFFAKDIESYEKNYKPLVDNMIQKDLALKGNLEGVELLIFASNQLPQDCQRWNMLFFLWGVFRGKKESCSNPPKNTPLPASCVSPNRDTFRHENPSNKKSLTDRTLSRMQSCMKEEDAKEGKACSGTEKENAFSVSYGEGEVDVETEEGEIGVSPQLKYEKTAGPGTVKSADMNQRVNVDDLNKEGLCEGPANKKLKTVTGVETGCSIVRRDTSVHKFASRKFV.

2 disordered regions span residues Ala-39–Asn-182 and Lys-187–Glu-206. Residues Lys-45–Ser-54 are compositionally biased toward basic and acidic residues. A compositionally biased stretch (polar residues) spans Ser-60–Asn-102. Composition is skewed to basic and acidic residues over residues Leu-119–Ala-140 and Lys-148–Asn-163. The PHD-type zinc finger occupies Val-212 to Ala-263. Residues Cys-215, Cys-218, Cys-230, Cys-233, His-239, Cys-242, Cys-257, and Cys-260 each coordinate Zn(2+). Disordered stretches follow at residues Ala-342–Gly-567 and Cys-839–Thr-875. Residues Ser-371–Arg-384 are compositionally biased toward low complexity. Composition is skewed to polar residues over residues Val-417–Asp-435 and Thr-449–Ile-464. Basic and acidic residues-rich tracts occupy residues Ser-469–Ser-478, Pro-536–Val-552, and Asp-858–Thr-875.

In terms of assembly, component of the ASI1-AIPP1-EDM2 (AAE) RNA regulatory complex composed of at least AIPP1/EDM3, ASI1 and EDM2 and may contain CPL2, AIPP2 and AIPP3/BDT1. Part of the BAH-PHD bivalent histone reader complex that contains AIPP2, PAIPP2 and AIPP3/BDT1; the BAH-PHD module associates with CPL2 to form the BAH-PHD-CPL2 complex (BPC) for transcriptional repression. Binds directly to ASI1, AIPP3/BDT1 and CPL2 but not to PAIPP2. As to expression, expressed ubiquitously.

Together with AIPP3/BDT1 and PAIPP2, cooperates to form a BAH-PHD bivalent histone reader complex able to read histone H3 lysine 27 trimethylation (H3K27me3) and low-methylated H3K4 histone marks in order to regulate transcription, especially to prevent early flowering; promotes AIPP3/BDT1 binding to H3K27me3. CPL2 is subsequently recruited to form a BAH-PHD-CPL2 complex (BPC) in order to silence several H3K27me3 and low-methylated H3K4 enriched loci, including AGO5, via the phosphorylation state-dependent inhibition of Pol II release from the transcriptional start site (e.g. Ser5P-Pol II dephosphorylation). The BPC complex represses flowering by inhibiting the expression of several genes, including AGL6, FT, FUL and SOC1. Prevents the accumulation of intronic heterochromatin-containing genes (e.g. IBM1, At3g05410 and RPP7). The chain is ASI1-immunoprecipitated protein 2 from Arabidopsis thaliana (Mouse-ear cress).